The following is a 423-amino-acid chain: Replication factor C large subunit (423 aa).

An ATP-binding site is contributed by 63–70 (GPPGIGKT).

Belongs to the activator 1 small subunits family. RfcL subfamily. In terms of assembly, heteromultimer composed of small subunits (RfcS) and large subunits (RfcL).

In terms of biological role, part of the RFC clamp loader complex which loads the PCNA sliding clamp onto DNA. The chain is Replication factor C large subunit from Pyrobaculum islandicum (strain DSM 4184 / JCM 9189 / GEO3).